A 223-amino-acid polypeptide reads, in one-letter code: Large ribosomal subunit protein bL21 (223 aa).

Positions 110-149 (TALKSTTAEPKAADAPKAKAKAAPKAEKAAAPKAEKAPAK) are disordered. Positions 133–147 (PKAEKAAAPKAEKAP) are enriched in basic and acidic residues.

Belongs to the bacterial ribosomal protein bL21 family. As to quaternary structure, part of the 50S ribosomal subunit. Contacts protein L20.

Its function is as follows. This protein binds to 23S rRNA in the presence of protein L20. The protein is Large ribosomal subunit protein bL21 of Maricaulis maris (strain MCS10) (Caulobacter maris).